A 466-amino-acid chain; its full sequence is Muscarinic acetylcholine receptor M2 (466 aa).

Residues 1–22 are Extracellular-facing; the sequence is MNNSTNSSNNGLAITSPYKTFE. N-linked (GlcNAc...) asparagine glycosylation is found at Asn2, Asn3, and Asn6. A helical transmembrane segment spans residues 23–45; the sequence is VVFIVLVAGSLSLVTIIGNILVM. The Cytoplasmic segment spans residues 46 to 59; sequence VSIKVNRHLQTVNN. A helical membrane pass occupies residues 60–80; the sequence is YFLFSLACADLIIGVFSMNLY. Residues 81 to 97 are Extracellular-facing; it reads TLYTVIGYWPLGPVVCD. Residues Cys96 and Cys176 are joined by a disulfide bond. Residues 98–119 traverse the membrane as a helical segment; the sequence is LWLALDYVVSNASVMNLLIISF. Positions 120 to 122 match the Important for signaling motif; it reads DRY. Over 120-139 the chain is Cytoplasmic; it reads DRYFCVTKPLTYPVKRTTKM. The chain crosses the membrane as a helical span at residues 140–162; it reads AGMMIAAAWVLSFILWAPAILFW. At 163–184 the chain is on the extracellular side; sequence QFIVGVRTVEDGECYIQFFSNA. The chain crosses the membrane as a helical span at residues 185–209; it reads AVTFGTAIAAFYLPVIIMTVLYWHI. The Cytoplasmic segment spans residues 210–387; that stretch reads SRASKSRIKK…PPSREKKVTR (178 aa). The segment at 218–320 is disordered; the sequence is KKEKKEPVAN…SLGHSKDDNS (103 aa). Phosphoserine is present on Ser232. The segment covering 254–270 has biased composition (basic and acidic residues); that stretch reads GLEHNKIQNGKAPRDGG. Polar residues-rich tracts occupy residues 284–293 and 304–313; these read NDSTSVSAVA and DENTVSTSLG. A helical membrane pass occupies residues 388-410; sequence TILAILLAFIITWAPYNVMVLIN. The Extracellular portion of the chain corresponds to 411–418; the sequence is TFCAPCIP. A disulfide bridge links Cys413 with Cys416. A helical membrane pass occupies residues 419–442; the sequence is NTVWTIGYWLCYINSTINPACYAL. The Important for signaling motif lies at 436–440; sequence NPACY. Over 443 to 466 the chain is Cytoplasmic; it reads CNATFKKTFKHLLMCHYKNIGATR. A phosphothreonine mark is found at Thr446, Thr450, and Thr465.

This sequence belongs to the G-protein coupled receptor 1 family. Muscarinic acetylcholine receptor subfamily. CHRM2 sub-subfamily. In terms of assembly, interacts with ARRB1 and ARRB2. Interacts with RACK1; the interaction regulates CHRM2 internalization. In terms of processing, phosphorylated in response to agonist treatment.

The protein localises to the cell membrane. The protein resides in the postsynaptic cell membrane. The muscarinic acetylcholine receptor mediates various cellular responses, including inhibition of adenylate cyclase, breakdown of phosphoinositides and modulation of potassium channels through the action of G proteins. Primary transducing effect is adenylate cyclase inhibition. Signaling promotes phospholipase C activity, leading to the release of inositol trisphosphate (IP3); this then triggers calcium ion release into the cytosol. The sequence is that of Muscarinic acetylcholine receptor M2 (Chrm2) from Mus musculus (Mouse).